Here is a 1043-residue protein sequence, read N- to C-terminus: Ack-related non-receptor tyrosine kinase (1043 aa).

A Protein kinase domain is found at 113–379 (ITLCKELGQG…SDIVAKFPER (267 aa)). ATP is bound by residues 119 to 127 (LGQGEFGSV) and K146. Catalysis depends on D241, which acts as the Proton acceptor. Positions 379 to 444 (RRAQSVRAVV…RPTDTVAHLG (66 aa)) constitute an SH3 domain. The tract at residues 443–481 (LGSEPPCSNGTIENGFSEKEKGGKKNKKAEKESERERKK) is disordered. Basic and acidic residues predominate over residues 458 to 481 (FSEKEKGGKKNKKAEKESERERKK). In terms of domain architecture, CRIB spans 484–498 (ISEPVGDVRHTCHVG). 4 disordered regions span residues 514-644 (MCPT…SAAN), 790-842 (KINE…GWSS), 859-898 (KQAS…LSVR), and 932-993 (LIDG…RQFP). Positions 516 to 543 (PTSSSPSTSRGSQASPAPSHTSSSTTSS) are enriched in low complexity. The span at 610–624 (GNQHSVQVHDQFSSL) shows a compositional bias: polar residues. Residues 630 to 644 (SLTPTAPPLTASAAN) are compositionally biased toward low complexity. Residues 785–812 (EQEVRKINEKSAREHRKTEDLLREERQK) are a coiled coil. A compositionally biased stretch (basic and acidic residues) spans 790 to 818 (KINEKSAREHRKTEDLLREERQKEQKPGE). Residues 825–842 (PAESLYSTRTPQQEGWSS) are compositionally biased toward polar residues. Positions 870–884 (PTSSRLSTLDRSSIS) are enriched in low complexity.

It belongs to the protein kinase superfamily. Tyr protein kinase family. It depends on Mg(2+) as a cofactor.

It carries out the reaction L-tyrosyl-[protein] + ATP = O-phospho-L-tyrosyl-[protein] + ADP + H(+). The catalysed reaction is L-seryl-[protein] + ATP = O-phospho-L-seryl-[protein] + ADP + H(+). The enzyme catalyses L-threonyl-[protein] + ATP = O-phospho-L-threonyl-[protein] + ADP + H(+). Probable tyrosine protein kinase which plays a role in vulva development, probably by acting as a negative regulator of the let-23/EGFR and let-60/ras pathway. Involved in the negative regulation of germline development. In Caenorhabditis elegans, this protein is Ack-related non-receptor tyrosine kinase.